The sequence spans 1202 residues: Ribonuclease P protein component, mitochondrial (1202 aa).

The N-terminal 122 residues, 1–122 (MAFKSFIYSK…NNNNNQHRYY (122 aa)), are a transit peptide targeting the mitochondrion. Positions 109–134 (NYVNNNNNNQHRYYSTGPTLPTNQYD) are disordered. The segment covering 118 to 134 (QHRYYSTGPTLPTNQYD) has biased composition (polar residues).

In terms of assembly, consists of an RNA moiety (RPM1) and the protein component (RPM2). Both are necessary for full enzymatic activity.

The protein localises to the mitochondrion. The enzyme catalyses Endonucleolytic cleavage of RNA, removing 5'-extranucleotides from tRNA precursor.. Functionally, ribonuclease P generates mature tRNA molecules by cleaving their 5'-ends. The sequence is that of Ribonuclease P protein component, mitochondrial (RPM2) from Saccharomyces cerevisiae (strain ATCC 204508 / S288c) (Baker's yeast).